Here is a 114-residue protein sequence, read N- to C-terminus: NADH-ubiquinone oxidoreductase chain 3 (114 aa).

3 helical membrane-spanning segments follow: residues Leu4–Leu24, Phe55–Phe75, and Val82–Ile102.

The protein belongs to the complex I subunit 3 family.

The protein localises to the mitochondrion membrane. The enzyme catalyses a ubiquinone + NADH + 5 H(+)(in) = a ubiquinol + NAD(+) + 4 H(+)(out). Its function is as follows. Core subunit of the mitochondrial membrane respiratory chain NADH dehydrogenase (Complex I) that is believed to belong to the minimal assembly required for catalysis. Complex I functions in the transfer of electrons from NADH to the respiratory chain. The immediate electron acceptor for the enzyme is believed to be ubiquinone. This chain is NADH-ubiquinone oxidoreductase chain 3 (ND3), found in Allomyces macrogynus.